Reading from the N-terminus, the 235-residue chain is MSNKLIYSGKAKDILATDDEDVIVAHYKDQATAFNGVKKEQIVGKGVLNNQISSFIFEKLNAAGVATHFIEKISDTDQLNKKVKIIPLEVVLRNYTAGSFSKRFGVEEGIALETPIVEFYYKNDDLDDPFINDEHVKFLKIANDEEIAFLKEETRRINKLLSDWFHQIGLKLIDFKLEFGFDKEGKIILADEFSPDNCRLWDAEGHHMDKDVFRRGLGELTDVYQVVWEKLQAIK.

The protein belongs to the SAICAR synthetase family.

The catalysed reaction is 5-amino-1-(5-phospho-D-ribosyl)imidazole-4-carboxylate + L-aspartate + ATP = (2S)-2-[5-amino-1-(5-phospho-beta-D-ribosyl)imidazole-4-carboxamido]succinate + ADP + phosphate + 2 H(+). Its pathway is purine metabolism; IMP biosynthesis via de novo pathway; 5-amino-1-(5-phospho-D-ribosyl)imidazole-4-carboxamide from 5-amino-1-(5-phospho-D-ribosyl)imidazole-4-carboxylate: step 1/2. In Streptococcus gordonii (strain Challis / ATCC 35105 / BCRC 15272 / CH1 / DL1 / V288), this protein is Phosphoribosylaminoimidazole-succinocarboxamide synthase.